The sequence spans 184 residues: Ferredoxin-thioredoxin reductase subunit A2, chloroplastic (184 aa).

Residues 1–71 constitute a chloroplast transit peptide; that stretch reads MTNSYALSPA…SRKNPKSTIR (71 aa).

The protein belongs to the ferredoxin thioredoxin reductase alpha subunit family. Heterodimer of subunit A (variable subunit) and subunit B (catalytic subunit). Heterodimeric FTR forms a complex with ferredoxin and thioredoxin.

The protein resides in the plastid. It localises to the chloroplast. Its function is as follows. Variable subunit of the ferredoxin-thioredoxin reductase (FTR), which catalyzes the two-electron reduction of thioredoxins by the electrons provided by reduced ferredoxin. This is Ferredoxin-thioredoxin reductase subunit A2, chloroplastic from Arabidopsis thaliana (Mouse-ear cress).